We begin with the raw amino-acid sequence, 571 residues long: RNA polymerase sigma factor SigA (571 aa).

Positions 321–391 (MVESNLRLVI…TRAIADQART (71 aa)) are sigma-70 factor domain-2. The Interaction with polymerase core subunit RpoC signature appears at 345 to 348 (DLIQ). The sigma-70 factor domain-3 stretch occupies residues 400–476 (ETINKVLRGA…DTAVESPAEA (77 aa)). Positions 489–542 (VLKTLTDRERFVLIHRFGLLDGRPKTLEEVGSAFNVTRERIRQIEAKALRKMRH) are sigma-70 factor domain-4. The segment at residues 515–534 (LEEVGSAFNVTRERIRQIEA) is a DNA-binding region (H-T-H motif).

Belongs to the sigma-70 factor family. RpoD/SigA subfamily. Interacts transiently with the RNA polymerase catalytic core.

It localises to the cytoplasm. Its function is as follows. Sigma factors are initiation factors that promote the attachment of RNA polymerase to specific initiation sites and are then released. This sigma factor is the primary sigma factor during exponential growth. The sequence is that of RNA polymerase sigma factor SigA from Chlamydia trachomatis serovar D (strain ATCC VR-885 / DSM 19411 / UW-3/Cx).